The chain runs to 256 residues: 5-oxoprolinase subunit A (256 aa).

Belongs to the LamB/PxpA family. As to quaternary structure, forms a complex composed of PxpA, PxpB and PxpC.

The enzyme catalyses 5-oxo-L-proline + ATP + 2 H2O = L-glutamate + ADP + phosphate + H(+). Its function is as follows. Catalyzes the cleavage of 5-oxoproline to form L-glutamate coupled to the hydrolysis of ATP to ADP and inorganic phosphate. This Geobacillus thermodenitrificans (strain NG80-2) protein is 5-oxoprolinase subunit A.